The chain runs to 477 residues: Tyrosine--tRNA ligase, mitochondrial (477 aa).

The transit peptide at 1–16 (MAAPILRSFSWGRWSG) directs the protein to the mitochondrion. Tyrosine 77 contributes to the L-tyrosine binding site. Aspartate 81 serves as a coordination point for ATP. Positions 82–91 (PTADSLHVGH) match the 'HIGH' region motif. L-tyrosine contacts are provided by aspartate 121, tyrosine 221, glutamine 225, and aspartate 228. Residue 244–246 (GSD) participates in ATP binding. Glutamine 247 provides a ligand contact to L-tyrosine. 2 residues coordinate ATP: isoleucine 274 and lysine 284. The short motif at 281–285 (KLGKS) is the 'KMSKS' region element. Residues lysine 355 and lysine 367 each carry the N6-acetyllysine modification.

This sequence belongs to the class-I aminoacyl-tRNA synthetase family. In terms of assembly, homodimer.

The protein resides in the mitochondrion matrix. The catalysed reaction is tRNA(Tyr) + L-tyrosine + ATP = L-tyrosyl-tRNA(Tyr) + AMP + diphosphate + H(+). Functionally, catalyzes the attachment of tyrosine to tRNA(Tyr) in a two-step reaction: tyrosine is first activated by ATP to form Tyr-AMP and then transferred to the acceptor end of tRNA(Tyr). The chain is Tyrosine--tRNA ligase, mitochondrial (YARS2) from Homo sapiens (Human).